A 132-amino-acid chain; its full sequence is Holo-[acyl-carrier-protein] synthase (132 aa).

Residues Asp13 and Glu63 each contribute to the Mg(2+) site.

This sequence belongs to the P-Pant transferase superfamily. AcpS family. It depends on Mg(2+) as a cofactor.

The protein localises to the cytoplasm. It catalyses the reaction apo-[ACP] + CoA = holo-[ACP] + adenosine 3',5'-bisphosphate + H(+). In terms of biological role, transfers the 4'-phosphopantetheine moiety from coenzyme A to a Ser of acyl-carrier-protein. The polypeptide is Holo-[acyl-carrier-protein] synthase (Gloeobacter violaceus (strain ATCC 29082 / PCC 7421)).